Consider the following 39-residue polypeptide: AGSMDSCSETGVCMKACSERIRQVENDNKCPAGECICTT.

3 cysteine pairs are disulfide-bonded: C7-C30, C13-C35, and C17-C37.

Belongs to the short scorpion toxin superfamily. Potassium channel inhibitor family. Alpha-KTx 31 subfamily. Expressed by the venom gland.

The protein resides in the secreted. Its function is as follows. Voltage-gated potassium channel inhibitor. 1 uM of the native toxin inhibits rat Kv1.2/KCNA2 (100% inhibition), and drosophila Shaker IR/Sh (100%), human Kv1.3/KCNA3 (83%), rat Kv1.1/KCNA1 (32%) and rat Kv1.6/KCNA6 (21%). This chain is Potassium channel toxin alpha-KTx 31.1, found in Buthus occitanus tunetanus (Common European scorpion).